The following is a 335-amino-acid chain: Tyrosine-protein phosphatase 1 (335 aa).

The region spanning Leu15–Leu328 is the Tyrosine-protein phosphatase domain. At Ser83 the chain carries Phosphoserine; by CLK1. Catalysis depends on Cys252, which acts as the Phosphocysteine intermediate.

Belongs to the protein-tyrosine phosphatase family. Non-receptor class subfamily. Post-translationally, activated by phosphorylation at Ser-83.

The protein localises to the cytoplasm. It carries out the reaction O-phospho-L-tyrosyl-[protein] + H2O = L-tyrosyl-[protein] + phosphate. In terms of biological role, is not required for vegetative growth. The sequence is that of Tyrosine-protein phosphatase 1 (PTP1) from Saccharomyces cerevisiae (strain ATCC 204508 / S288c) (Baker's yeast).